The following is a 151-amino-acid chain: FAD synthase (151 aa).

ATP contacts are provided by residues threonine 12–phenylalanine 13, histidine 17–histidine 20, aspartate 97, and tyrosine 125.

Belongs to the archaeal FAD synthase family. As to quaternary structure, homodimer. A divalent metal cation is required as a cofactor.

The enzyme catalyses FMN + ATP + H(+) = FAD + diphosphate. It participates in cofactor biosynthesis; FAD biosynthesis; FAD from FMN: step 1/1. Its function is as follows. Catalyzes the transfer of the AMP portion of ATP to flavin mononucleotide (FMN) to produce flavin adenine dinucleotide (FAD) coenzyme. The chain is FAD synthase from Methanocaldococcus sp. (strain FS406-22).